A 114-amino-acid polypeptide reads, in one-letter code: Superoxide dismutase [Cu-Zn] (114 aa).

Positions 37, 39, and 54 each coordinate Cu cation. Residues 49–73 (MSSGPHYNPRNKEHGAPTDENRHLG) form a disordered region. The Zn(2+) site is built by His54, His62, His71, and Asp74. Over residues 58–73 (RNKEHGAPTDENRHLG) the composition is skewed to basic and acidic residues. Residue His111 participates in Cu cation binding.

The protein belongs to the Cu-Zn superoxide dismutase family. As to quaternary structure, homodimer. Cu cation serves as cofactor. Zn(2+) is required as a cofactor.

The protein resides in the cytoplasm. The enzyme catalyses 2 superoxide + 2 H(+) = H2O2 + O2. In terms of biological role, destroys radicals which are normally produced within the cells and which are toxic to biological systems. The polypeptide is Superoxide dismutase [Cu-Zn] (Drosophila madeirensis (Fruit fly)).